The sequence spans 783 residues: Probable phosphoketolase (783 aa).

The protein belongs to the XFP family. It depends on thiamine diphosphate as a cofactor.

This is Probable phosphoketolase from Rhodopseudomonas palustris (strain ATCC BAA-98 / CGA009).